Reading from the N-terminus, the 53-residue chain is MFRWGIIFLVIALIAAALGFGGLAGTAAWAAKIVFVVGIILFLISLFTGRRGR.

Transmembrane regions (helical) follow at residues 4–24 (WGII…GGLA) and 27–47 (AAWA…ISLF).

This sequence belongs to the UPF0391 family.

The protein resides in the cell membrane. This is UPF0391 membrane protein SG0393 from Sodalis glossinidius (strain morsitans).